The sequence spans 285 residues: Small ribosomal subunit protein uS3 (285 aa).

Residues 39-107 (VREFLKKKLK…PVAVNIEEVR (69 aa)) form the KH type-2 domain. Residues 211–285 (GDAPVMRGED…RAAPPAAKGE (75 aa)) form a disordered region. Over residues 217–241 (RGEDRPEDDRRRRNPRGDRPGDRRG) the composition is skewed to basic and acidic residues. Residues 242 to 255 (PGAGRGGPGAGRGP) show a composition bias toward gly residues. Low complexity-rich tracts occupy residues 256-267 (ADGASAAPSGDA) and 276-285 (RAAPPAAKGE).

This sequence belongs to the universal ribosomal protein uS3 family. Part of the 30S ribosomal subunit. Forms a tight complex with proteins S10 and S14.

Its function is as follows. Binds the lower part of the 30S subunit head. Binds mRNA in the 70S ribosome, positioning it for translation. The polypeptide is Small ribosomal subunit protein uS3 (Leptothrix cholodnii (strain ATCC 51168 / LMG 8142 / SP-6) (Leptothrix discophora (strain SP-6))).